The following is a 455-amino-acid chain: Na(+)/H(+) antiporter NhaA (455 aa).

A run of 11 helical transmembrane segments spans residues 31–51 (ASGI…NSPW), 83–103 (GLMS…VLIG), 113–133 (FPLI…LLCV), 141–161 (GWGI…ILLG), 170–190 (VFVT…IALF), 198–218 (VSLL…LLGI), 231–251 (IWAA…LLAF), 309–329 (GLQP…NAGV), 345–365 (IGVA…FAWL), 383–403 (IFGA…IASL), and 414–434 (SKIG…VVLW).

Belongs to the NhaA Na(+)/H(+) (TC 2.A.33) antiporter family.

It is found in the cell inner membrane. It catalyses the reaction Na(+)(in) + 2 H(+)(out) = Na(+)(out) + 2 H(+)(in). Functionally, na(+)/H(+) antiporter that extrudes sodium in exchange for external protons. This is Na(+)/H(+) antiporter NhaA from Koribacter versatilis (strain Ellin345).